The primary structure comprises 380 residues: MGIKNLTQFLKKYKVYETIDVAELKYSKICIDTPMFLYKFVSQYPNSNEWLGCFVTLITWLRKWNIHPTFVFEGKAPPEKNQTQEARKESRQKIVSKTDAIEQDLRTYLKSGTITPLLLDTWQKIRSKSTKSLLVKRPLNLIVKNFINVDEIRLEIDRRRKYEFSITFAHVNLLKELLDLMGVGYIQSKGEAEADCVSLWYNNAVDYIVSEDTDVLAYTFAGGAPGTSTPKKVPNTTDLKVITGFNVGESSATIISKQRVLSTLKMTAESFKDFCIMCGTDYNKNIFRVGVEKAYKYISDYKVIENVPLDTSVLDHHNVRKIFRVKKSIKYADKVQWSKYPSDNFVEVLNTFIWTHAGGTVDSDHVFRVLTDPALDIVFE.

Residues 1-101 (MGIKNLTQFL…QKIVSKTDAI (101 aa)) form an N-domain region. D32, E73, E191, E193, D212, D214, and D281 together coordinate Mg(2+). The I-domain stretch occupies residues 156-301 (IDRRRKYEFS…EKAYKYISDY (146 aa)).

This sequence belongs to the XPG/RAD2 endonuclease family. Mg(2+) is required as a cofactor.

The protein localises to the host nucleus. Probable endonuclease. The protein is Probable RAD2-like endonuclease 076L of Invertebrate iridescent virus 3 (IIV-3).